The following is a 337-amino-acid chain: Tryptophan--tRNA ligase (337 aa).

Residues 11–13 and 19–20 contribute to the ATP site; these read QPT and GN. The short motif at 12–20 is the 'HIGH' region element; the sequence is PTGNLHLGN. Asp135 contributes to the L-tryptophan binding site. ATP is bound by residues 147 to 149, Val190, and 199 to 203; these read GED and KMSKS. A 'KMSKS' region motif is present at residues 199 to 203; that stretch reads KMSKS.

It belongs to the class-I aminoacyl-tRNA synthetase family. In terms of assembly, homodimer.

It is found in the cytoplasm. It catalyses the reaction tRNA(Trp) + L-tryptophan + ATP = L-tryptophyl-tRNA(Trp) + AMP + diphosphate + H(+). Catalyzes the attachment of tryptophan to tRNA(Trp). This is Tryptophan--tRNA ligase from Synechocystis sp. (strain ATCC 27184 / PCC 6803 / Kazusa).